The chain runs to 592 residues: Ferric-chelate reductase 1 (592 aa).

The helical transmembrane segment at 2 to 22 (AVSGFTLGTCILLLHISYVAN) threads the bilayer. The 167-residue stretch at 13 to 179 (LLLHISYVAN…FTTPKATVVP (167 aa)) folds into the Reelin domain. N-linked (GlcNAc...) asparagine glycosylation is found at asparagine 138, asparagine 308, and asparagine 321. A DOMON domain is found at 216–331 (EASCVFLSFT…TSYYIFLADG (116 aa)). One can recognise a Cytochrome b561 domain in the interval 335 to 534 (DGRIYKHSQQ…VGTEVVLEVH (200 aa)). Residues 372–392 (VHGALMFVAWMTTVSIGVLVA) traverse the membrane as a helical segment. Positions 373 and 414 each coordinate heme b. A run of 2 helical transmembrane segments spans residues 415 to 435 (RMLMFTTTVLTCIAFVMPFIY) and 446 to 466 (HPYLGCIVMTLAVLQPLLAVF). The heme b site is built by histidine 446 and histidine 482. A run of 3 helical transmembrane segments spans residues 491-511 (IIAVAAMFLGMDLPGLNLPDS), 515-535 (YAMTGFVAWHVGTEVVLEVHA), and 569-589 (AVLAIYVCGNVTFLIIFLSAI).

The protein belongs to the FRRS1 family. The cofactor is heme b.

The protein localises to the membrane. Functionally, ferric-chelate reductases reduce Fe(3+) to Fe(2+) before its transport from the endosome to the cytoplasm. The polypeptide is Ferric-chelate reductase 1 (FRRS1) (Homo sapiens (Human)).